The primary structure comprises 304 residues: tRNA dimethylallyltransferase (304 aa).

13–20 serves as a coordination point for ATP; that stretch reads GPTAAGKT. 15 to 20 contributes to the substrate binding site; sequence TAAGKT. Positions 38-41 are interaction with substrate tRNA; sequence DSRQ.

The protein belongs to the IPP transferase family. As to quaternary structure, monomer. Mg(2+) serves as cofactor.

The catalysed reaction is adenosine(37) in tRNA + dimethylallyl diphosphate = N(6)-dimethylallyladenosine(37) in tRNA + diphosphate. Its function is as follows. Catalyzes the transfer of a dimethylallyl group onto the adenine at position 37 in tRNAs that read codons beginning with uridine, leading to the formation of N6-(dimethylallyl)adenosine (i(6)A). This is tRNA dimethylallyltransferase from Cytophaga hutchinsonii (strain ATCC 33406 / DSM 1761 / CIP 103989 / NBRC 15051 / NCIMB 9469 / D465).